A 235-amino-acid polypeptide reads, in one-letter code: Small ribosomal subunit protein uS3 (235 aa).

In terms of domain architecture, KH type-2 spans 39–107 (VRKFLLGQLS…PTKLNISEIR (69 aa)).

The protein belongs to the universal ribosomal protein uS3 family. Part of the 30S ribosomal subunit. Forms a tight complex with proteins S10 and S14.

Functionally, binds the lower part of the 30S subunit head. Binds mRNA in the 70S ribosome, positioning it for translation. The protein is Small ribosomal subunit protein uS3 of Blochmanniella floridana.